The sequence spans 186 residues: Large ribosomal subunit protein uL5 (186 aa).

This sequence belongs to the universal ribosomal protein uL5 family. Part of the 50S ribosomal subunit; part of the 5S rRNA/L5/L18/L25 subcomplex. Contacts the 5S rRNA and the P site tRNA. Forms a bridge to the 30S subunit in the 70S ribosome.

In terms of biological role, this is one of the proteins that bind and probably mediate the attachment of the 5S RNA into the large ribosomal subunit, where it forms part of the central protuberance. In the 70S ribosome it contacts protein S13 of the 30S subunit (bridge B1b), connecting the 2 subunits; this bridge is implicated in subunit movement. Contacts the P site tRNA; the 5S rRNA and some of its associated proteins might help stabilize positioning of ribosome-bound tRNAs. This is Large ribosomal subunit protein uL5 from Mycoplasmopsis synoviae (strain 53) (Mycoplasma synoviae).